Consider the following 318-residue polypeptide: Protoheme IX farnesyltransferase (318 aa).

9 consecutive transmembrane segments (helical) span residues Val-33–His-53, Pro-54–Leu-74, Gly-102–Ala-122, Val-125–Trp-145, Ile-154–Gly-174, Trp-181–Phe-201, Val-225–Asn-245, Ile-246–Ala-266, and Phe-288–Leu-308.

This sequence belongs to the UbiA prenyltransferase family. Protoheme IX farnesyltransferase subfamily. In terms of assembly, interacts with CtaA.

It localises to the cell inner membrane. The catalysed reaction is heme b + (2E,6E)-farnesyl diphosphate + H2O = Fe(II)-heme o + diphosphate. Its pathway is porphyrin-containing compound metabolism; heme O biosynthesis; heme O from protoheme: step 1/1. Its function is as follows. Converts heme B (protoheme IX) to heme O by substitution of the vinyl group on carbon 2 of heme B porphyrin ring with a hydroxyethyl farnesyl side group. This is Protoheme IX farnesyltransferase from Ruegeria pomeroyi (strain ATCC 700808 / DSM 15171 / DSS-3) (Silicibacter pomeroyi).